The chain runs to 172 residues: Female-specific lacrimal gland protein (172 aa).

A signal peptide spans 1–16; it reads MVKFLLLALALGVSCA. 2 cysteine pairs are disulfide-bonded: C60-C64 and C79-C170.

This sequence belongs to the calycin superfamily. Lipocalin family. In terms of tissue distribution, expressed in the lacrimal gland from where it is secreted into tears (at protein level).

The protein localises to the secreted. In Mesocricetus auratus (Golden hamster), this protein is Female-specific lacrimal gland protein.